A 184-amino-acid polypeptide reads, in one-letter code: NADH-quinone oxidoreductase subunit B 1 (184 aa).

Positions 37, 38, 103, and 132 each coordinate [4Fe-4S] cluster.

The protein belongs to the complex I 20 kDa subunit family. NDH-1 is composed of 14 different subunits. Subunits NuoB, C, D, E, F, and G constitute the peripheral sector of the complex. The cofactor is [4Fe-4S] cluster.

Its subcellular location is the cell membrane. The catalysed reaction is a quinone + NADH + 5 H(+)(in) = a quinol + NAD(+) + 4 H(+)(out). In terms of biological role, NDH-1 shuttles electrons from NADH, via FMN and iron-sulfur (Fe-S) centers, to quinones in the respiratory chain. The immediate electron acceptor for the enzyme in this species is believed to be a menaquinone. Couples the redox reaction to proton translocation (for every two electrons transferred, four hydrogen ions are translocated across the cytoplasmic membrane), and thus conserves the redox energy in a proton gradient. In Streptomyces coelicolor (strain ATCC BAA-471 / A3(2) / M145), this protein is NADH-quinone oxidoreductase subunit B 1.